The sequence spans 226 residues: PKHD-type hydroxylase Plav_0377 (226 aa).

The Fe2OG dioxygenase domain occupies 78-178 (KVLPPRFNRY…RLASFFWVQS (101 aa)). Fe cation contacts are provided by His-96, Asp-98, and His-159. Residue Arg-169 coordinates 2-oxoglutarate.

Requires Fe(2+) as cofactor. It depends on L-ascorbate as a cofactor.

The sequence is that of PKHD-type hydroxylase Plav_0377 from Parvibaculum lavamentivorans (strain DS-1 / DSM 13023 / NCIMB 13966).